The following is a 329-amino-acid chain: Thioredoxin-like fold domain-containing protein MRL7L homolog, chloroplastic (329 aa).

Residues 1–46 (MALQSCCSSSASVPATCSALCLAEATRAASLFVRPRAAARRLVLAR) constitute a chloroplast transit peptide. A disordered region spans residues 58 to 91 (AVQLVLGGRARDDGSESESSDDEDDDEPMQMTDE). Residues 72–85 (SESESSDDEDDDEP) show a composition bias toward acidic residues.

It localises to the plastid. It is found in the chloroplast stroma. Functionally, plays an essential role in early steps of chloroplast development. Involved in the regulation of plastid gene expression. Required for the proper function of the plastid transcriptional machinery and protein accumulation in thylakoid membranes. May function as molecular chaperone to ensure proper organization of the nucleoids in chloroplasts. This is Thioredoxin-like fold domain-containing protein MRL7L homolog, chloroplastic from Oryza sativa subsp. japonica (Rice).